We begin with the raw amino-acid sequence, 201 residues long: Superoxide dismutase [Fe] (201 aa).

Fe cation is bound by residues H27, H79, D161, and H165.

This sequence belongs to the iron/manganese superoxide dismutase family. As to quaternary structure, homodimer. Fe cation is required as a cofactor.

The catalysed reaction is 2 superoxide + 2 H(+) = H2O2 + O2. In terms of biological role, destroys superoxide anion radicals which are normally produced within the cells and which are toxic to biological systems. In Synechococcus elongatus (strain ATCC 33912 / PCC 7942 / FACHB-805) (Anacystis nidulans R2), this protein is Superoxide dismutase [Fe] (sodB).